Here is an 878-residue protein sequence, read N- to C-terminus: MSKVHNSEYIKELVVDNTSYKIYDINKAASDIGLPLKKLPYSLRVLLENVLRTNGNKENLLVFKEWLKTKKSNTEIDFMPARVLMQDFTGVPAIVDLAAMRDAMQKIGCNPLKINPLIPVDLVIDHSVSVDSYGNKESFDQNVHMEMKRNIERYQFLKWGQQAFNNFKVVPPGTGICHQVNLEFLSQVVWHNDGTAYPDSLVGTDSHTTMVNGLSVLGWGVGGIEAESAMLGQPITMIIPEVIGVKLIGKLAGMATATDLVLTITEILRRKKVVGKFVEFFGNGLRNLTISDRATISNMSPEYGATCGFFPIDQETLKYLEVTGREITQIKLVEKYAIEQNLWYNCEDTQEYTEVLELDLSTVYSSLAGPKRPQDRVNLNCVASNFQNELPYFALANKDIDKKYAVANQNYAIGNGDVVIAAITSCTNTSNPSVMIGAALLAKKALEHGLNVKPWVKTSLAPGSKVVTEYLKLSGLDKYLDALGFNLVGYGCTTCIGNSGSLNPEIENTINKNRLVVASVLSGNRNFEGRINPLTKASYLASPILVVAYALSGTLNIDLTNTPIGANIYLKDIWPSQKEIDEVIANSINSSMFIEKYADVFNGTKEWRDLQITTGTNYNWDKNSTYINNPPYFDNIGSEHSIKDIKSARILAIFGDSITTDHISPAGSISKNSPAAKYLIKHHIEPLDFNSYGSRRGNHEVMMRGTFANIRIKNEMCNGVEGGFTINQLSGVQQTIYDTAMDYKAHDIPLVIFAGKEYGSGSSRDWAAKGPGLLGIKAVIAESFERIHRSNLVGMGILPLTFTGKNTRLNLKLDGSEIIDLIGLSENIKPYNLVKCVIKKQTNEISTIDLILQIFTENEINYIKHGSIMQFVVESLKG.

[4Fe-4S] cluster-binding residues include Cys-426, Cys-492, and Cys-495.

It belongs to the aconitase/IPM isomerase family. Monomer. Requires [4Fe-4S] cluster as cofactor.

The catalysed reaction is citrate = D-threo-isocitrate. It catalyses the reaction (2S,3R)-3-hydroxybutane-1,2,3-tricarboxylate = 2-methyl-cis-aconitate + H2O. Its pathway is carbohydrate metabolism; tricarboxylic acid cycle; isocitrate from oxaloacetate: step 2/2. It participates in organic acid metabolism; propanoate degradation. Its function is as follows. Involved in the catabolism of short chain fatty acids (SCFA) via the tricarboxylic acid (TCA)(acetyl degradation route) and probably the 2-methylcitrate cycle I (propionate degradation route). Catalyzes the reversible isomerization of citrate to isocitrate via cis-aconitate. Could catalyze the hydration of 2-methyl-cis-aconitate to yield (2R,3S)-2-methylisocitrate. The apo form of AcnA functions as a RNA-binding regulatory protein. This is Aconitate hydratase A (acnA) from Rickettsia prowazekii (strain Madrid E).